Here is a 375-residue protein sequence, read N- to C-terminus: Chaperone protein DnaJ (375 aa).

Residues 6-71 (DYYEILGVSR…DKRARYDQYG (66 aa)) form the J domain. The CR-type zinc-finger motif lies at 132-214 (GTTKKITIPR…CQGSGKVRKQ (83 aa)). Residues Cys145, Cys148, Cys162, Cys165, Cys188, Cys191, Cys202, and Cys205 each contribute to the Zn(2+) site. CXXCXGXG motif repeat units follow at residues 145–152 (CDTCNGTG), 162–169 (CPQCNGSG), 188–195 (CDRCGGRG), and 202–209 (CPTCQGSG). Positions 222-243 (PPGVDTGTRLRMPNEGEAGDKG) are disordered.

The protein belongs to the DnaJ family. In terms of assembly, homodimer. Requires Zn(2+) as cofactor.

It is found in the cytoplasm. In terms of biological role, participates actively in the response to hyperosmotic and heat shock by preventing the aggregation of stress-denatured proteins and by disaggregating proteins, also in an autonomous, DnaK-independent fashion. Unfolded proteins bind initially to DnaJ; upon interaction with the DnaJ-bound protein, DnaK hydrolyzes its bound ATP, resulting in the formation of a stable complex. GrpE releases ADP from DnaK; ATP binding to DnaK triggers the release of the substrate protein, thus completing the reaction cycle. Several rounds of ATP-dependent interactions between DnaJ, DnaK and GrpE are required for fully efficient folding. Also involved, together with DnaK and GrpE, in the DNA replication of plasmids through activation of initiation proteins. This is Chaperone protein DnaJ from Halothermothrix orenii (strain H 168 / OCM 544 / DSM 9562).